A 671-amino-acid chain; its full sequence is Spartin (671 aa).

Position 1 is an N-acetylmethionine (Met-1). The region spanning 16-94 (IKEAYEKAFM…LQNVRTRLEI (79 aa)) is the MIT domain. Positions 110–175 (VPKLYPEFPP…CPAEAPPAYS (66 aa)) are disordered. Basic and acidic residues predominate over residues 118 to 128 (PPKDACKKSPE). Ser-126 bears the Phosphoserine mark. The span at 143 to 158 (GSASAACAGPSGAPSA) shows a compositional bias: low complexity. Residues 159 to 174 (LPVPSPSCPAEAPPAY) are compositionally biased toward pro residues. A ubiquitin-binding region (UBR) domain region spans residues 190-385 (DSGEFSSVGE…SIDQGSKDAR (196 aa)). Residues 193–200 (EFSSVGED) carry the LC3-interacting region (LIR); mediates interaction with MAP1LC3A AND MAP1LC3C motif. The interval 346 to 421 (FQIPGRSSHP…SSEEKSKELP (76 aa)) is disordered. Lys-360 participates in a covalent cross-link: Glycyl lysine isopeptide (Lys-Gly) (interchain with G-Cter in ubiquitin). Residues 369–379 (QSSSSGSSIDQ) show a composition bias toward low complexity. Residues 384 to 393 (ARHKGKRGKK) are compositionally biased toward basic residues. Positions 431-615 (ILSGASWVSW…YNIDNIGIKA (185 aa)) constitute a Senescence domain. Residues 435 to 507 (ASWVSWGLVK…LVDGVCTVAN (73 aa)) form a required for localization to lipid droplets region. Ser-474 bears the Phosphoserine mark. Positions 635–671 (VERPQRESQGGATSTEGRRDIGKQVEEEKPGAGKKDK) are disordered. The span at 650–671 (EGRRDIGKQVEEEKPGAGKKDK) shows a compositional bias: basic and acidic residues.

Interacts with ITCH and WWP1. Interacts (via MIT domain) with IST1; leading to the recruitment of SPART to midbodies. Interacts with MAP1LC3A and MAP1LC3C. Ubiquitinated; ubiquitination does not require ITCH and WWP1. As to expression, brain (at protein level).

Its subcellular location is the cytoplasm. The protein resides in the midbody. It is found in the lipid droplet. Lipophagy receptor that plays an important role in lipid droplet (LD) turnover in motor neurons. Localizes to LDs and interacts with components of the autophagy machinery, such as MAP1LC3A/C proteins to deliver LDs to autophagosomes for degradation via lipophagy. Lipid transfer protein required for lipid droplet degradation, including by lipophagy. Can bind and transfer all lipid species found in lipid droplets, from phospholipids to triglycerides and sterol esters but the direction of lipid transfer by spartin and its cargos are unknown. May be implicated in endosomal trafficking, or microtubule dynamics, or both. Participates in cytokinesis. This is Spartin from Mus musculus (Mouse).